The chain runs to 474 residues: MSEKFSPTLRLGDLNDFIAPSQACVISLKDSKPIVKKSDRPQVVIAPKQQLEPVKISLKDCLACSGCITSAETVMLEKQSLDEFLSALSKGKDVVVSVSPQSRASLAVHYDISPLQVFKKLTTFLKSLGVKAVFDTSCSRDLVLIESCNEFVSRYKQANSDDGENSQSPLPVLSSACPGWICYAEKQLGSYVLPYVSSVKSPQQAIGAAIKHHLCQALGLRLHEVYHVTVMPCYDKKLEAARDDFVFDDGTQDNGDLKLTEVDSVLTTGEIMDLIKLKGVDFKDLEESPLDRVLTNVTEEGDLYGVAGSSGGYAETIFRHAAKALFGQTIEGPLEFKTLRNSDFREVTLQLEGKTVLKFALCYGFQNLQNIVRRVKTRKCDYQYVEIMACPAGCLNGGGQIKPKTGQSQKELIHSLEATYMNDTTLNTDPYQNPTAKRLFEEWLKEPGSNEAKKYLHTQYHPVVKSVTSQLNNW.

The [4Fe-4S] cluster site is built by Cys-24, Cys-61, Cys-64, Cys-67, Cys-177, Cys-233, Cys-390, and Cys-394.

It belongs to the NARF family. Part of a complex composed of AE7, CIA1, MMS19 and NAR1. Interacts with CIA1. As to expression, expressed in developing tissues, including shoot apex, young leaves, vascular tissues, root tips, pedicels, carpels and developing seeds.

The protein localises to the nucleus. The protein resides in the cytoplasm. Essential component of the cytosolic iron-sulfur (Fe-S) protein assembly (CIA) machinery. Required for the maturation of extramitochondrial Fe/S proteins. Required for expression of the imprinted FWA gene, for seed development and is involved in the oxidative stress response in vegetative tissues. Involved in the regulation of cell size, ploidy and cell cycle progression. Required for growth under normoxic conditions and necessary for recovery after hypoxic treatment but its action is reactive oxygen species (ROS) independent. The protein is Protein NAR1 of Arabidopsis thaliana (Mouse-ear cress).